Here is a 232-residue protein sequence, read N- to C-terminus: Putative N-acetylmannosamine-6-phosphate 2-epimerase (232 aa).

It belongs to the NanE family.

It carries out the reaction an N-acyl-D-glucosamine 6-phosphate = an N-acyl-D-mannosamine 6-phosphate. Its pathway is amino-sugar metabolism; N-acetylneuraminate degradation; D-fructose 6-phosphate from N-acetylneuraminate: step 3/5. In terms of biological role, converts N-acetylmannosamine-6-phosphate (ManNAc-6-P) to N-acetylglucosamine-6-phosphate (GlcNAc-6-P). This chain is Putative N-acetylmannosamine-6-phosphate 2-epimerase, found in Borrelia garinii subsp. bavariensis (strain ATCC BAA-2496 / DSM 23469 / PBi) (Borreliella bavariensis).